The following is a 107-amino-acid chain: Pathogenesis-related protein PR-4 (107 aa).

The region spanning 1–107 (QNINWDLRTA…VNYDFVDCGD (107 aa)) is the Barwin domain. 3 disulfide bridges follow: Cys14–Cys46, Cys35–Cys69, and Cys49–Cys105.

Preferentially expressed in the tissue surrounding the abscission zone of fruitlets.

The protein localises to the secreted. The protein resides in the cell wall. Functionally, may be involved in protecting plant tissues from pathogen infection. This Prunus persica (Peach) protein is Pathogenesis-related protein PR-4.